The primary structure comprises 429 residues: Tol-Pal system protein TolB (429 aa).

An N-terminal signal peptide occupies residues 1-28 (MSITPSFSRRSVVSLLAAGAFSSMSAFA).

It belongs to the TolB family. The Tol-Pal system is composed of five core proteins: the inner membrane proteins TolA, TolQ and TolR, the periplasmic protein TolB and the outer membrane protein Pal. They form a network linking the inner and outer membranes and the peptidoglycan layer.

It localises to the periplasm. Part of the Tol-Pal system, which plays a role in outer membrane invagination during cell division and is important for maintaining outer membrane integrity. This is Tol-Pal system protein TolB from Polaromonas naphthalenivorans (strain CJ2).